Consider the following 1123-residue polypeptide: Leucine--tRNA ligase, cytoplasmic (1123 aa).

The short motif at 84 to 94 (PYMNGRLHAGH) is the 'HIGH' region element. Positions 757–761 (KMSKS) match the 'KMSKS' region motif. Residue lysine 760 participates in ATP binding.

It belongs to the class-I aminoacyl-tRNA synthetase family.

It localises to the cytoplasm. The enzyme catalyses tRNA(Leu) + L-leucine + ATP = L-leucyl-tRNA(Leu) + AMP + diphosphate. The sequence is that of Leucine--tRNA ligase, cytoplasmic (leu-6) from Neurospora crassa (strain ATCC 24698 / 74-OR23-1A / CBS 708.71 / DSM 1257 / FGSC 987).